A 317-amino-acid polypeptide reads, in one-letter code: Acetylglutamate kinase (317 aa).

Substrate contacts are provided by residues 70 to 71 (GG), arginine 92, and asparagine 191.

Belongs to the acetylglutamate kinase family. ArgB subfamily.

The protein localises to the cytoplasm. It carries out the reaction N-acetyl-L-glutamate + ATP = N-acetyl-L-glutamyl 5-phosphate + ADP. Its pathway is amino-acid biosynthesis; L-arginine biosynthesis; N(2)-acetyl-L-ornithine from L-glutamate: step 2/4. Its function is as follows. Catalyzes the ATP-dependent phosphorylation of N-acetyl-L-glutamate. This Corynebacterium glutamicum (strain R) protein is Acetylglutamate kinase.